We begin with the raw amino-acid sequence, 1379 residues long: DNA-directed RNA polymerase subunit beta'' (1379 aa).

Residues cysteine 220, cysteine 291, cysteine 298, and cysteine 301 each coordinate Zn(2+).

Belongs to the RNA polymerase beta' chain family. RpoC2 subfamily. In terms of assembly, in plastids the minimal PEP RNA polymerase catalytic core is composed of four subunits: alpha, beta, beta', and beta''. When a (nuclear-encoded) sigma factor is associated with the core the holoenzyme is formed, which can initiate transcription. Zn(2+) serves as cofactor.

It localises to the plastid. It carries out the reaction RNA(n) + a ribonucleoside 5'-triphosphate = RNA(n+1) + diphosphate. Functionally, DNA-dependent RNA polymerase catalyzes the transcription of DNA into RNA using the four ribonucleoside triphosphates as substrates. The protein is DNA-directed RNA polymerase subunit beta'' of Cuscuta reflexa (Southern Asian dodder).